Consider the following 495-residue polypeptide: Heat stress transcription factor A-1a (495 aa).

The DNA-binding element occupies 50 to 144 (PPPFLSKTYD…LLKKISRRKS (95 aa)). Positions 140 to 164 (SRRKSVQGHGSSSSNPQSQQLSQGQ) are disordered. Positions 146 to 164 (QGHGSSSSNPQSQQLSQGQ) are enriched in low complexity. The tract at residues 172-238 (SCVEVGKFGL…QIMSFLAKAV (67 aa)) is hydrophobic repeat HR-A/B. Residues 255–288 (NMHVTEANKKRRLREDSTAATESNSHSHSLEASD) form a disordered region. Residues 262–268 (NKKRRLR) carry the Nuclear localization signal motif. Residues 272 to 281 (TAATESNSHS) are compositionally biased toward polar residues. The AHA motif lies at 433–442 (FEFLEEYMPE). The disordered stretch occupies residues 445 to 477 (VFGDATTLENNNNNNNNNNNNNNNNNNNNTNGR). A compositionally biased stretch (low complexity) spans 454–473 (NNNNNNNNNNNNNNNNNNNN). The short motif at 482 to 489 (LIEELGLL) is the Nuclear export signal element.

The protein belongs to the HSF family. Class A subfamily. As to quaternary structure, homotrimer. Interacts with HSP70-1 and HSP70-4. Binds to CRK1. Binds to HSBP. Exhibits temperature-dependent phosphorylation. Phosphorylated by CRK1. In terms of tissue distribution, constitutively expressed.

Its subcellular location is the cytoplasm. It is found in the nucleus. Its function is as follows. Transcriptional activator that specifically binds DNA sequence 5'-AGAAnnTTCT-3' known as heat shock promoter elements (HSE). The protein is Heat stress transcription factor A-1a (HSFA1A) of Arabidopsis thaliana (Mouse-ear cress).